The following is a 799-amino-acid chain: Rho GTPase-activating protein gacI (799 aa).

Residues Ile226–Phe451 form the Rho-GAP domain. Residues Arg472–Asp520 show a composition bias toward polar residues. Disordered regions lie at residues Arg472–Asn572 and Glu741–Gln799. Residues Asp525–Ala549 are compositionally biased toward low complexity. Positions Thr550–Thr568 are enriched in pro residues. Composition is skewed to low complexity over residues Gln743–Asn752 and Ile759–Ser791.

The protein resides in the cytoplasm. Functionally, rho GTPase-activating protein involved in the signal transduction pathway. This chain is Rho GTPase-activating protein gacI (gacI), found in Dictyostelium discoideum (Social amoeba).